Consider the following 383-residue polypeptide: Delta(12)-fatty-acid desaturase FAD2 (383 aa).

2 helical membrane passes run 56–76 and 84–104; these read VVYDLTVAFIFYYIATNYFHL and VAWPIYWALQGCVLTGVWVIA. The short motif at 105 to 109 is the Histidine box-1 element; it reads HECGH. Residues 117–137 traverse the membrane as a helical segment; sequence LLDDIVGLVLHSCLLVPYFSW. The Histidine box-2 motif lies at 141-145; the sequence is HRRHH. 3 helical membrane passes run 179 to 199, 225 to 245, and 249 to 269; these read LFTLTITLTLGWPLYLAFNVS, IYISDAGVLAVTFGLYRLAAA, and AWVICVYGVPLLIVNAFLVMI. The Histidine box-3 motif lies at 315–319; the sequence is HVAHH.

It belongs to the fatty acid desaturase type 1 family. Expressed in leaves and seeds.

The protein localises to the endoplasmic reticulum membrane. The catalysed reaction is (9Z)-octadecenoyl-CoA + 2 Fe(II)-[cytochrome b5] + O2 + 2 H(+) = (9Z,12Z)-octadecadienoyl-CoA + 2 Fe(III)-[cytochrome b5] + 2 H2O. It carries out the reaction (9Z)-hexadecenoyl-CoA + 2 Fe(II)-[cytochrome b5] + O2 + 2 H(+) = (9Z,12Z)-hexadecadienoyl-CoA + 2 Fe(III)-[cytochrome b5] + 2 H2O. It participates in lipid metabolism; polyunsaturated fatty acid biosynthesis. Catalyzes the desaturation of oleic acid (18:1(9Z)) to linoleic acid (18:2(9Z,12Z)). The protein is Delta(12)-fatty-acid desaturase FAD2 of Vernicia fordii (Tung).